The following is a 220-amino-acid chain: Germin-like protein subfamily T member 2 (220 aa).

Positions Met1–Ser27 are cleaved as a signal peptide. A disulfide bridge links Cys37 with Cys52. A Cupin type-1 domain is found at Ser64–Asn212. Asn71 carries N-linked (GlcNAc...) asparagine glycosylation. Residues His112, His114, and Glu119 each coordinate Mn(2+). Asn136 is a glycosylation site (N-linked (GlcNAc...) asparagine). His158 serves as a coordination point for Mn(2+).

It belongs to the germin family. As to quaternary structure, oligomer (believed to be a pentamer but probably hexamer).

The protein localises to the secreted. It is found in the extracellular space. It localises to the apoplast. Functionally, may play a role in plant defense. Probably has no oxalate oxidase activity even if the active site is conserved. The polypeptide is Germin-like protein subfamily T member 2 (Arabidopsis thaliana (Mouse-ear cress)).